The following is a 1733-amino-acid chain: Gag-Pol polyprotein (1733 aa).

Residue glycine 2 is the site of N-myristoyl glycine; by host attachment. A PTAP/PSAP motif motif is present at residues 109 to 112 (PSAP). Positions 112 to 121 (PSLLPEPPLS) are enriched in pro residues. 2 disordered regions span residues 112 to 196 (PSLL…ASRL) and 202 to 221 (LPVA…GGNG). Residues 128–132 (LYPAL) carry the LYPX(n)L motif motif. Residues 159–170 (DPPPYRDPGPPP) are compositionally biased toward pro residues. A PPXY motif motif is present at residues 160–163 (PPPY). Serine 190 is subject to Phosphoserine; by host. Residues 343–391 (GRSPTNLAKVKGITQGPNESPSAFLERLKEAYRRYTPYDPEDPGQETNV) form an interaction with host PIAS4 region. Residues 428 to 433 (IFNKRE) form an interaction with host UBE2I region. Composition is skewed to basic and acidic residues over residues 432 to 464 (RETP…EKER) and 484 to 496 (KQDR…RRPQ). Disordered regions lie at residues 432-496 (RETP…RRPQ) and 511-550 (WAKD…EPRI). Positions 436 to 476 (EEREERIKRETEEKEERRRAEDEQKEKERDRRRHREMSKLL) form a coiled coil. The CCHC-type zinc finger occupies 500 to 517 (DQCAYCKEKGHWAKDCPK). The Peptidase A2 domain maps to 559 to 629 (VTFLVDTGAQ…CPYPLLGRDL (71 aa)). The active-site Protease; shared with dimeric partner is the aspartate 564. Positions 739 to 930 (LDQGILVPCQ…KQVKYLGYLL (192 aa)) constitute a Reverse transcriptase domain. Residues aspartate 807, aspartate 881, aspartate 882, aspartate 1181, glutamate 1219, aspartate 1240, and aspartate 1310 each coordinate Mg(2+). Positions 1172 to 1318 (PDADHTWYTD…ADQAAREVAT (147 aa)) constitute an RNase H type-1 domain. Residues 1385–1425 (HQLTHLSFSKTKALLERSPSPYYMLNRDRTLKNITETCKAC) form an HHCC-type zinc finger. The 159-residue stretch at 1442-1600 (RGHRPGTHWE…TPYEILYGAP (159 aa)) folds into the Integrase catalytic domain. Residues aspartate 1453 and aspartate 1512 each contribute to the Mg(2+) site.

As to quaternary structure, homohexamer; further associates as homomultimer. The virus core is composed of a lattice formed from hexagonal rings, each containing six capsid monomers. Interacts with mouse UBE2I and mouse PIAS4. In terms of assembly, interacts (via PPXY motif) with host NEDD4. Interacts (via PSAP motif) with host TSG101. Interacts (via LYPX(n)L motif) with host PDCD6IP. The reverse transcriptase is a monomer (Potential). Interacts (via RNase domains) with host release factor ETF1; this interaction is essential for translational readthrough of amber codon between viral gag and pol genes, as well as for viral replication. As to quaternary structure, homodimer. Requires Mg(2+) as cofactor. In terms of processing, ubiquitinated by ITCH. Gag can recruit the ubiquitin ligase Itch in an L domain-independent manner to facilitate virus release via a mechanism that involves Gag ubiquitination. Post-translationally, specific enzymatic cleavages by the viral protease yield mature proteins. The protease is released by autocatalytic cleavage. The polyprotein is cleaved during and after budding, this process is termed maturation. Sumoylated; which is required for virus replication. In terms of processing, phosphorylated on serine residues.

The protein resides in the virion. The protein localises to the host cell membrane. Its subcellular location is the host late endosome membrane. It localises to the host endosome. It is found in the host multivesicular body. The protein resides in the host cytoplasm. The catalysed reaction is DNA(n) + a 2'-deoxyribonucleoside 5'-triphosphate = DNA(n+1) + diphosphate. The enzyme catalyses Endonucleolytic cleavage to 5'-phosphomonoester.. With respect to regulation, most efficiently inhibited by Amprenavir, which is able to block Gag-Pol processing in infected cells. Functionally, plays a role in budding and is processed by the viral protease during virion maturation outside the cell. During budding, it recruits, in a PPXY-dependent or independent manner, Nedd4-like ubiquitin ligases that conjugate ubiquitin molecules to Gag-Pol, or to Gag-Pol binding host factors. Interaction with HECT ubiquitin ligases probably links the viral protein to the host ESCRT pathway and facilitates release. Its function is as follows. Targets Gag and gag-pol polyproteins to the plasma membrane via a multipartite membrane binding signal, that includes its myristoylated N-terminus. Also mediates nuclear localization of the pre-integration complex. In terms of biological role, constituent of the pre-integration complex (PIC) which tethers the latter to mitotic chromosomes. This allows the integration of the viral genome into the host DNA. Forms the spherical core of the virion that encapsulates the genomic RNA-nucleocapsid complex. Functionally, involved in the packaging and encapsidation of two copies of the genome. Binds with high affinity to conserved UCUG elements within the packaging signal, located near the 5'-end of the genome. This binding is dependent on genome dimerization. Acts as a nucleic acid chaperone which is involved in rearrangement of nucleic acid secondary structures during gRNA retrotranscription. Its function is as follows. The aspartyl protease mediates proteolytic cleavages of Gag and Gag-Pol polyproteins during or shortly after the release of the virion from the plasma membrane. Cleavages take place as an ordered, step-wise cascade to yield mature proteins. This process is called maturation. Displays maximal activity during the budding process just prior to particle release from the cell (Potential). Cleaves the translation initiation factor eIF4G leading to the inhibition of host cap-dependent translation. In terms of biological role, RT is a multifunctional enzyme that converts the viral dimeric RNA genome into dsDNA in the cytoplasm, shortly after virus entry into the cell. This enzyme displays a DNA polymerase activity that can copy either DNA or RNA templates, and a ribonuclease H (RNase H) activity that cleaves the RNA strand of RNA-DNA heteroduplexes in a partially processive 3' to 5' endonucleasic mode. Conversion of viral genomic RNA into dsDNA requires many steps. A tRNA binds to the primer-binding site (PBS) situated at the 5' end of the viral RNA. RT uses the 3' end of the tRNA primer to perform a short round of RNA-dependent minus-strand DNA synthesis. The reading proceeds through the U5 region and ends after the repeated (R) region which is present at both ends of viral RNA. The portion of the RNA-DNA heteroduplex is digested by the RNase H, resulting in a ssDNA product attached to the tRNA primer. This ssDNA/tRNA hybridizes with the identical R region situated at the 3' end of viral RNA. This template exchange, known as minus-strand DNA strong stop transfer, can be either intra- or intermolecular. RT uses the 3' end of this newly synthesized short ssDNA to perform the RNA-dependent minus-strand DNA synthesis of the whole template. RNase H digests the RNA template except for a polypurine tract (PPT) situated at the 5' end of the genome. It is not clear if both polymerase and RNase H activities are simultaneous. RNase H probably can proceed both in a polymerase-dependent (RNA cut into small fragments by the same RT performing DNA synthesis) and a polymerase-independent mode (cleavage of remaining RNA fragments by free RTs). Secondly, RT performs DNA-directed plus-strand DNA synthesis using the PPT that has not been removed by RNase H as primers. PPT and tRNA primers are then removed by RNase H. The 3' and 5' ssDNA PBS regions hybridize to form a circular dsDNA intermediate. Strand displacement synthesis by RT to the PBS and PPT ends produces a blunt ended, linear dsDNA copy of the viral genome that includes long terminal repeats (LTRs) at both ends. Catalyzes viral DNA integration into the host chromosome, by performing a series of DNA cutting and joining reactions. This enzyme activity takes place after virion entry into a cell and reverse transcription of the RNA genome in dsDNA. The first step in the integration process is 3' processing. This step requires a complex comprising the viral genome, matrix protein and integrase. This complex is called the pre-integration complex (PIC). The integrase protein removes 2 nucleotides from each 3' end of the viral DNA, leaving recessed CA OH's at the 3' ends. In the second step that requires cell division, the PIC enters cell nucleus. In the third step, termed strand transfer, the integrase protein joins the previously processed 3' ends to the 5' ends of strands of target cellular DNA at the site of integration. The last step is viral DNA integration into host chromosome. This is Gag-Pol polyprotein (gag-pol) from Cas-Br-E murine leukemia virus.